The chain runs to 768 residues: Telomere repeats-binding bouquet formation protein 1 (768 aa).

ARM repeat units lie at residues 101 to 145 (ELFQ…REVG) and 341 to 384 (NGLP…GQNS). Residues 399 to 448 (ETLREHWKAAKEILCRIKQFEKGGKEEKQQNRSGHYKDNTPSMKVNIQTN) adopt a coiled-coil conformation. 2 stretches are compositionally biased toward basic and acidic residues: residues 422-436 (GKEE…HYKD) and 461-475 (RAED…ELRS). Disordered stretches follow at residues 422–441 (GKEE…TPSM) and 454–475 (ADST…ELRS). Positions 524–700 (QNLDKEKTFD…EAMERRSPVP (177 aa)) are interaction with TERF1. Residue Thr648 is modified to Phosphothreonine. One can recognise a Myb-like domain in the interval 707–760 (KKRRIRKDFTKEEVNYLFHGVKTMGNHWNSILWSFPFQKGRRAVDLAHKYHRLI).

Belongs to the TERB1 family. Component of the MAJIN-TERB1-TERB2 complex, composed of MAJIN, TERB1 and TERB2. Interacts with TERF1, STAG3 and SUN1. Interacts (via Myb-like domain) with the cohesin complex; probably mediated via interaction with STAG3. Phosphorylated by CDK. Phosphorylation by CDK takes place in late prophase when the cap exchange is prominent. is important for the stabilization of telomere attachment but dispenable for the cap exchange. Expressed in testis and fetal oocytes.

The protein resides in the chromosome. It is found in the telomere. It localises to the nucleus inner membrane. Its function is as follows. Meiosis-specific telomere-associated protein involved in meiotic telomere attachment to the nucleus inner membrane, a crucial step for homologous pairing and synapsis. Component of the MAJIN-TERB1-TERB2 complex, which promotes telomere cap exchange by mediating attachment of telomeric DNA to the inner nuclear membrane and replacement of the protective cap of telomeric chromosomes: in early meiosis, the MAJIN-TERB1-TERB2 complex associates with telomeric DNA and the shelterin/telosome complex. During prophase, the complex matures and promotes release of the shelterin/telosome complex from telomeric DNA. In the MAJIN-TERB1-TERB2 complex, TERB1 probably mediates association with the shelterin/telosome complex via interaction with TERF1, promoting priming telomeric DNA attachment'. Promotes telomere association with the nuclear envelope and deposition of the SUN-KASH/LINC complex. Also recruits cohesin to telomeres to develop structural rigidity. This chain is Telomere repeats-binding bouquet formation protein 1, found in Mus musculus (Mouse).